The sequence spans 463 residues: Argininosuccinate lyase (463 aa).

This sequence belongs to the lyase 1 family. Argininosuccinate lyase subfamily.

The protein resides in the cytoplasm. It catalyses the reaction 2-(N(omega)-L-arginino)succinate = fumarate + L-arginine. It functions in the pathway amino-acid biosynthesis; L-arginine biosynthesis; L-arginine from L-ornithine and carbamoyl phosphate: step 3/3. The chain is Argininosuccinate lyase from Bradyrhizobium sp. (strain BTAi1 / ATCC BAA-1182).